The chain runs to 90 residues: Progonadoliberin-3 (90 aa).

The first 23 residues, 1 to 23, serve as a signal peptide directing secretion; it reads MDVSSKVVVQVLLLALVVQVTLC. At Gln-24 the chain carries Pyrrolidone carboxylic acid. Position 33 is a glycine amide (Gly-33).

Belongs to the GnRH family. As to expression, expressed in neuron cell bodies of the nucleus olfactoretinalis.

Its subcellular location is the secreted. Functionally, stimulates the secretion of gonadotropins. The polypeptide is Progonadoliberin-3 (gnrh3) (Oryzias latipes (Japanese rice fish)).